The chain runs to 146 residues: Small ribosomal subunit protein uS13A (146 aa).

N-acetylserine is present on Ser-2. A Glycyl lysine isopeptide (Lys-Gly) (interchain with G-Cter in ubiquitin) cross-link involves residue Lys-36. Position 48 is an N6-methyllysine; by RKM1 (Lys-48). Residues Lys-49, Lys-80, and Lys-96 each participate in a glycyl lysine isopeptide (Lys-Gly) (interchain with G-Cter in ubiquitin) cross-link.

This sequence belongs to the universal ribosomal protein uS13 family. As to quaternary structure, component of the small ribosomal subunit (SSU). Mature yeast ribosomes consist of a small (40S) and a large (60S) subunit. The 40S small subunit contains 1 molecule of ribosomal RNA (18S rRNA) and 33 different proteins (encoded by 57 genes). The large 60S subunit contains 3 rRNA molecules (25S, 5.8S and 5S rRNA) and 46 different proteins (encoded by 81 genes). N-terminally acetylated by acetyltransferase NatA.

Its subcellular location is the cytoplasm. Functionally, component of the ribosome, a large ribonucleoprotein complex responsible for the synthesis of proteins in the cell. The small ribosomal subunit (SSU) binds messenger RNAs (mRNAs) and translates the encoded message by selecting cognate aminoacyl-transfer RNA (tRNA) molecules. The large subunit (LSU) contains the ribosomal catalytic site termed the peptidyl transferase center (PTC), which catalyzes the formation of peptide bonds, thereby polymerizing the amino acids delivered by tRNAs into a polypeptide chain. The nascent polypeptides leave the ribosome through a tunnel in the LSU and interact with protein factors that function in enzymatic processing, targeting, and the membrane insertion of nascent chains at the exit of the ribosomal tunnel. The chain is Small ribosomal subunit protein uS13A from Saccharomyces cerevisiae (strain ATCC 204508 / S288c) (Baker's yeast).